Here is a 549-residue protein sequence, read N- to C-terminus: Glucose-6-phosphate isomerase (549 aa).

The active-site Proton donor is the E353. Active-site residues include H384 and K510. The interval 523 to 549 (AEPPAAQSDSSTDALVRRYRSERGRTA) is disordered. Over residues 537-549 (LVRRYRSERGRTA) the composition is skewed to basic and acidic residues.

This sequence belongs to the GPI family.

The protein localises to the cytoplasm. It catalyses the reaction alpha-D-glucose 6-phosphate = beta-D-fructose 6-phosphate. The protein operates within carbohydrate biosynthesis; gluconeogenesis. Its pathway is carbohydrate degradation; glycolysis; D-glyceraldehyde 3-phosphate and glycerone phosphate from D-glucose: step 2/4. Functionally, catalyzes the reversible isomerization of glucose-6-phosphate to fructose-6-phosphate. This Mycolicibacterium gilvum (strain PYR-GCK) (Mycobacterium gilvum (strain PYR-GCK)) protein is Glucose-6-phosphate isomerase.